Consider the following 439-residue polypeptide: O-methyltransferase aurJ (439 aa).

Asp283 provides a ligand contact to S-adenosyl-L-methionine. Residue His338 is the Proton acceptor of the active site.

This sequence belongs to the class I-like SAM-binding methyltransferase superfamily. Cation-independent O-methyltransferase family. COMT subfamily.

The catalysed reaction is norrubrofusarin + S-adenosyl-L-methionine = rubrofusarin + S-adenosyl-L-homocysteine + H(+). The protein operates within pigment biosynthesis. Its function is as follows. O-methyltransferase; part of the gene cluster that mediates the biosynthesis of aurofusarin, a red mycelium pigment which is acting as a mycotoxin. The first step is performed by the polyketide synthase which condenses one acetyl-CoA and 6 malonyl-CoA units to form the first intermediate, the cyclic heptaketide and yellow pigment YWA1. The C2 hydroxyl group in the pyrone ring of YWA1 is probably formed during ring closure by an aldol-type cyclization reaction. The dehydratase aurZ then acts as the first tailoring enzyme in the aurofusarin biosynthetic pathway by converting YWA1 to nor-rubrofusarin. Nor-rubrofusarin is then methylated to rubrofusarin by the O-methyltransferase aurJ. Rubrofusarin is then transported across the plasma membrane by the rubrofusarin-specific pump aurT for further enzymatic processing by the extracellular complex composed of GIP1, aurF, aurO and aurS to yield aurofusarin. In Gibberella zeae (strain ATCC MYA-4620 / CBS 123657 / FGSC 9075 / NRRL 31084 / PH-1) (Wheat head blight fungus), this protein is O-methyltransferase aurJ.